A 419-amino-acid chain; its full sequence is Zinc metalloproteinase-disintegrin-like atrolysin-A (419 aa).

A Peptidase M12B domain is found at 6–202; the sequence is RYVELVIVAD…YNPQCILNEP (197 aa). Glu-9 serves as a coordination point for Ca(2+). N-linked (GlcNAc...) asparagine glycosylation is present at Asn-72. Asp-93 contacts Ca(2+). Cystine bridges form between Cys-117–Cys-197, Cys-157–Cys-181, and Cys-159–Cys-164. His-142 provides a ligand contact to Zn(2+). Residue Glu-143 is part of the active site. Positions 146 and 152 each coordinate Zn(2+). Ca(2+)-binding residues include Cys-197, Asn-200, Val-212, Asn-215, Leu-217, Glu-219, Glu-222, and Asp-225. The 87-residue stretch at 210–296 folds into the Disintegrin domain; the sequence is PPVCGNELLE…DCPTDDFHRN (87 aa). Cystine bridges form between Cys-213-Cys-242, Cys-224-Cys-237, Cys-226-Cys-232, Cys-236-Cys-259, Cys-250-Cys-256, Cys-255-Cys-281, Cys-268-Cys-288, Cys-275-Cys-307, Cys-300-Cys-312, Cys-319-Cys-369, Cys-334-Cys-376, Cys-347-Cys-357, Cys-364-Cys-398, and Cys-392-Cys-403. A D/ECD-tripeptide motif is present at residues 274–276; the sequence is ECD. N-linked (GlcNAc...) asparagine glycans are attached at residues Asn-326, Asn-338, and Asn-342.

Belongs to the venom metalloproteinase (M12B) family. P-III subfamily. P-IIIa sub-subfamily. In terms of assembly, monomer. Requires Zn(2+) as cofactor. Expressed by the venom gland.

The protein localises to the secreted. It catalyses the reaction Cleavage of 3-Asn-|-Gln-4, 5-His-|-Leu-6, 10-His-|-Leu-11, 14-Ala-|-Leu-15 and 16-Tyr-|-Leu-17 in insulin B chain. Removes C-terminal Leu from small peptides.. In terms of biological role, snake venom zinc metalloproteinase-disintegrin that causes hemorrhage by provoking the degradation of the sub-endothelial matrix proteins (fibronectin, laminin, type IV collagen, nidogen, and gelatins) and disturbances in platelet function. The recombinant cysteine-rich domain interacts with the alpha-2/beta-1 integrin (ITGA2/ITGB1) (collagen receptor), and inhibits the platelet aggregation induced by collagen. This is Zinc metalloproteinase-disintegrin-like atrolysin-A from Crotalus atrox (Western diamondback rattlesnake).